The primary structure comprises 463 residues: ATP-dependent protease ATPase subunit HslU (463 aa).

Residues Ile19 and 61–66 (GVGKTE) each bind ATP. Residues 154 to 174 (FGGAQNSSQTSDTQEDGEIEK) form a disordered region. ATP-binding residues include Asp277, Glu341, and Arg413.

The protein belongs to the ClpX chaperone family. HslU subfamily. A double ring-shaped homohexamer of HslV is capped on each side by a ring-shaped HslU homohexamer. The assembly of the HslU/HslV complex is dependent on binding of ATP.

The protein localises to the cytoplasm. Its function is as follows. ATPase subunit of a proteasome-like degradation complex; this subunit has chaperone activity. The binding of ATP and its subsequent hydrolysis by HslU are essential for unfolding of protein substrates subsequently hydrolyzed by HslV. HslU recognizes the N-terminal part of its protein substrates and unfolds these before they are guided to HslV for hydrolysis. This chain is ATP-dependent protease ATPase subunit HslU, found in Bacillus cereus (strain G9842).